The primary structure comprises 62 residues: UPF0434 protein RSc2531 (62 aa).

This sequence belongs to the UPF0434 family.

The chain is UPF0434 protein RSc2531 from Ralstonia nicotianae (strain ATCC BAA-1114 / GMI1000) (Ralstonia solanacearum).